A 454-amino-acid chain; its full sequence is NADH-quinone oxidoreductase subunit H (454 aa).

Helical transmembrane passes span 18–38, 88–108, 131–151, 172–192, 206–226, 256–276, 296–316, 328–348, and 360–380; these read WWLV…TVLF, VVYV…IAVI, LPIA…GIVL, MISY…YSGS, WYIV…VGET, FMLA…TLFL, WWPM…FIWL, LMKL…MLVA, and FADI…LSFV. Residues 395–454 form a disordered region; it reads AEEPAAFDPMAGGFPVPPLPGQTLPPVPRRRPRRDRELIVSGGPDTASDGPANGKEASDG. The segment covering 409–421 has biased composition (pro residues); the sequence is PVPPLPGQTLPPV.

Belongs to the complex I subunit 1 family. NDH-1 is composed of 14 different subunits. Subunits NuoA, H, J, K, L, M, N constitute the membrane sector of the complex.

It is found in the cell membrane. The enzyme catalyses a quinone + NADH + 5 H(+)(in) = a quinol + NAD(+) + 4 H(+)(out). NDH-1 shuttles electrons from NADH, via FMN and iron-sulfur (Fe-S) centers, to quinones in the respiratory chain. The immediate electron acceptor for the enzyme in this species is believed to be ubiquinone. Couples the redox reaction to proton translocation (for every two electrons transferred, four hydrogen ions are translocated across the cytoplasmic membrane), and thus conserves the redox energy in a proton gradient. This subunit may bind ubiquinone. This Streptomyces avermitilis (strain ATCC 31267 / DSM 46492 / JCM 5070 / NBRC 14893 / NCIMB 12804 / NRRL 8165 / MA-4680) protein is NADH-quinone oxidoreductase subunit H.